The sequence spans 633 residues: 1-deoxy-D-xylulose-5-phosphate synthase (633 aa).

The segment covering 1–12 (MSEPTANLQPAS) has biased composition (polar residues). Residues 1 to 21 (MSEPTANLQPASRTPLLDRVN) are disordered. Thiamine diphosphate contacts are provided by residues His86 and 127–129 (GHA). Asp158 is a Mg(2+) binding site. Thiamine diphosphate-binding positions include 159–160 (GS), Asn187, and Glu377. A Mg(2+)-binding site is contributed by Asn187.

This sequence belongs to the transketolase family. DXPS subfamily. Homodimer. Mg(2+) is required as a cofactor. Thiamine diphosphate serves as cofactor.

The catalysed reaction is D-glyceraldehyde 3-phosphate + pyruvate + H(+) = 1-deoxy-D-xylulose 5-phosphate + CO2. The protein operates within metabolic intermediate biosynthesis; 1-deoxy-D-xylulose 5-phosphate biosynthesis; 1-deoxy-D-xylulose 5-phosphate from D-glyceraldehyde 3-phosphate and pyruvate: step 1/1. Functionally, catalyzes the acyloin condensation reaction between C atoms 2 and 3 of pyruvate and glyceraldehyde 3-phosphate to yield 1-deoxy-D-xylulose-5-phosphate (DXP). In Deinococcus geothermalis (strain DSM 11300 / CIP 105573 / AG-3a), this protein is 1-deoxy-D-xylulose-5-phosphate synthase.